A 216-amino-acid chain; its full sequence is Kynurenine formamidase (216 aa).

Trp25 contacts substrate. The Zn(2+) site is built by His55, His59, and Asp61. His65 functions as the Proton donor/acceptor in the catalytic mechanism. Zn(2+)-binding residues include His167 and Glu179.

This sequence belongs to the Cyclase 1 superfamily. KynB family. Homodimer. The cofactor is Zn(2+).

It catalyses the reaction N-formyl-L-kynurenine + H2O = L-kynurenine + formate + H(+). It participates in amino-acid degradation; L-tryptophan degradation via kynurenine pathway; L-kynurenine from L-tryptophan: step 2/2. Its function is as follows. Catalyzes the hydrolysis of N-formyl-L-kynurenine to L-kynurenine, the second step in the kynurenine pathway of tryptophan degradation. The protein is Kynurenine formamidase of Cupriavidus taiwanensis (strain DSM 17343 / BCRC 17206 / CCUG 44338 / CIP 107171 / LMG 19424 / R1) (Ralstonia taiwanensis (strain LMG 19424)).